The following is a 93-amino-acid chain: YcgL domain-containing protein Spea_2443 (93 aa).

The region spanning 1 to 85 is the YcgL domain; sequence MICAVYKSLR…PVVNLLEQHK (85 aa).

The protein is YcgL domain-containing protein Spea_2443 of Shewanella pealeana (strain ATCC 700345 / ANG-SQ1).